The primary structure comprises 1074 residues: Fibrous sheath CABYR-binding protein (1074 aa).

The disordered stretch occupies residues M1–Y73. A phosphoserine mark is found at S25, S57, S186, and S275. Disordered regions lie at residues Q272–V294 and L317–P343. A compositionally biased stretch (low complexity) spans P274–A290. Position 365 is a phosphoserine (S365). 2 disordered regions span residues V437–S789 and G818–T982. Residues P448 to S467 are compositionally biased toward low complexity. Pro residues predominate over residues V528 to L544. Over residues E558–E575 the composition is skewed to low complexity. 2 stretches are compositionally biased toward pro residues: residues F576–L592 and P673–A688. Over residues T689–V720 the composition is skewed to low complexity. S1020 is subject to Phosphoserine. Residues S1026–T1054 are disordered.

In terms of assembly, interacts with CABYR. Interacts with ROPN1 and ROPN1L; the interaction increases upon spermatozoa capacitation conditions. In terms of processing, phosphorylated by PKA upon spermatozoa capacitation conditions. Expression is restricted to testis and epididymis, expressed by spermatozoa.

It localises to the cell projection. The protein resides in the cilium. Its subcellular location is the flagellum. May be involved in the later stages of fibrous sheath biogenesis and spermatozoa capacitation. Inhibits ROPN1 and ROPN1L SUMOylation. Binds calcium. This Mus musculus (Mouse) protein is Fibrous sheath CABYR-binding protein.